Reading from the N-terminus, the 415-residue chain is Adenosylhomocysteinase (415 aa).

Positions 53, 124, and 147 each coordinate substrate. 148–150 is a binding site for NAD(+); it reads TTT. The substrate site is built by K177 and D181. NAD(+) contacts are provided by residues N182, 211-216, E234, N269, 290-292, and N337; these read GYGWVG and SGH.

It belongs to the adenosylhomocysteinase family. Requires NAD(+) as cofactor.

The protein localises to the cytoplasm. The catalysed reaction is S-adenosyl-L-homocysteine + H2O = L-homocysteine + adenosine. Its pathway is amino-acid biosynthesis; L-homocysteine biosynthesis; L-homocysteine from S-adenosyl-L-homocysteine: step 1/1. Functionally, may play a key role in the regulation of the intracellular concentration of adenosylhomocysteine. The sequence is that of Adenosylhomocysteinase from Sulfurisphaera tokodaii (strain DSM 16993 / JCM 10545 / NBRC 100140 / 7) (Sulfolobus tokodaii).